A 146-amino-acid chain; its full sequence is 3-hydroxyacyl-[acyl-carrier-protein] dehydratase FabZ (146 aa).

The active site involves His-47.

The protein belongs to the thioester dehydratase family. FabZ subfamily.

It is found in the cytoplasm. It carries out the reaction a (3R)-hydroxyacyl-[ACP] = a (2E)-enoyl-[ACP] + H2O. In terms of biological role, involved in unsaturated fatty acids biosynthesis. Catalyzes the dehydration of short chain beta-hydroxyacyl-ACPs and long chain saturated and unsaturated beta-hydroxyacyl-ACPs. The sequence is that of 3-hydroxyacyl-[acyl-carrier-protein] dehydratase FabZ from Methylococcus capsulatus (strain ATCC 33009 / NCIMB 11132 / Bath).